Reading from the N-terminus, the 27-residue chain is Cupiennin-3d (27 aa).

The residue at position 27 (E27) is a Glutamic acid 1-amide.

As to expression, expressed by the venom gland.

The protein resides in the secreted. The sequence is that of Cupiennin-3d from Cupiennius salei (American wandering spider).